The chain runs to 346 residues: Flap endonuclease 1 (346 aa).

The N-domain stretch occupies residues 1-102 (MGVTELGKLI…AEIEERRKTR (102 aa)). Positions 31, 84, 156, 158, 177, 179, and 239 each coordinate Mg(2+). Positions 120–261 (DVAKYAKRAV…KALKLIWEFG (142 aa)) are I-domain.

This sequence belongs to the XPG/RAD2 endonuclease family. FEN1 subfamily. As to quaternary structure, interacts with PCNA. PCNA stimulates the nuclease activity without altering cleavage specificity. The cofactor is Mg(2+).

Structure-specific nuclease with 5'-flap endonuclease and 5'-3' exonuclease activities involved in DNA replication and repair. During DNA replication, cleaves the 5'-overhanging flap structure that is generated by displacement synthesis when DNA polymerase encounters the 5'-end of a downstream Okazaki fragment. Binds the unpaired 3'-DNA end and kinks the DNA to facilitate 5' cleavage specificity. Cleaves one nucleotide into the double-stranded DNA from the junction in flap DNA, leaving a nick for ligation. Also involved in the base excision repair (BER) pathway. Acts as a genome stabilization factor that prevents flaps from equilibrating into structures that lead to duplications and deletions. Also possesses 5'-3' exonuclease activity on nicked or gapped double-stranded DNA. This chain is Flap endonuclease 1, found in Pyrobaculum aerophilum (strain ATCC 51768 / DSM 7523 / JCM 9630 / CIP 104966 / NBRC 100827 / IM2).